A 320-amino-acid chain; its full sequence is Malate dehydrogenase (320 aa).

NAD(+) contacts are provided by residues 10 to 15 and Asp-34; that span reads GAGQIG. Positions 83 and 89 each coordinate substrate. NAD(+) contacts are provided by residues Asn-96 and 119–121; that span reads ITN. Substrate contacts are provided by Asn-121 and Arg-152. The Proton acceptor role is filled by His-176.

Belongs to the LDH/MDH superfamily. MDH type 3 family.

It carries out the reaction (S)-malate + NAD(+) = oxaloacetate + NADH + H(+). In terms of biological role, catalyzes the reversible oxidation of malate to oxaloacetate. In Methylobacterium sp. (strain 4-46), this protein is Malate dehydrogenase.